We begin with the raw amino-acid sequence, 174 residues long: Peptide deformylase (174 aa).

The Fe cation site is built by Cys96 and His138. Glu139 is an active-site residue. Residue His142 participates in Fe cation binding.

It belongs to the polypeptide deformylase family. Fe(2+) serves as cofactor.

It carries out the reaction N-terminal N-formyl-L-methionyl-[peptide] + H2O = N-terminal L-methionyl-[peptide] + formate. Functionally, removes the formyl group from the N-terminal Met of newly synthesized proteins. Requires at least a dipeptide for an efficient rate of reaction. N-terminal L-methionine is a prerequisite for activity but the enzyme has broad specificity at other positions. The protein is Peptide deformylase of Helicobacter pylori (strain HPAG1).